We begin with the raw amino-acid sequence, 406 residues long: Prisilkin-39 (406 aa).

A signal peptide spans 1–19; sequence MKGFLTLLLVCAILSTGYC. Helical transmembrane passes span 26-48 and 58-80; these read ALTG…GAGA and VGVG…YGGY. The 10 X 12 AA tandem repeat of G-G-Y-[SG]-G-Y-[GS]-Y-G-Y-P-[AT] stretch occupies residues 78–197; the sequence is GGYSGYGYGY…YSGYSYGYPT (120 aa).

As to expression, expression is confined to the prism and organic layers of the shell with no expression detected in the nacreous shell layer. Also expressed in the mantle edge, extrapallial fluid, hemolymph and, to a lesser extent, in the viscus (at protein level). In the mantle, localizes to inner epithelial cells of the outer fold and the outer epithelial cells of the middle fold at the bottom of the periostracal groove.

Its subcellular location is the membrane. Binds chitin and may serve as a framework constituent participating in shell formation. Inhibits aragonite precipitation and may regulate aragonite growth during shell layer formation. Does not affect calcite crystallization. This chain is Prisilkin-39, found in Pinctada fucata (Akoya pearl oyster).